Here is a 223-residue protein sequence, read N- to C-terminus: Ribonuclease 3 (223 aa).

Positions 3 to 125 (LERLQKKLGY…IIAAIYLDAG (123 aa)) constitute an RNase III domain. Glutamate 38 contributes to the Mg(2+) binding site. Residue aspartate 42 is part of the active site. Mg(2+) is bound by residues aspartate 111 and glutamate 114. The active site involves glutamate 114. The DRBM domain occupies 152-222 (DPKTRLQEFL…AEQVLAKLTT (71 aa)).

The protein belongs to the ribonuclease III family. Homodimer. Mg(2+) is required as a cofactor.

The protein resides in the cytoplasm. It carries out the reaction Endonucleolytic cleavage to 5'-phosphomonoester.. In terms of biological role, digests double-stranded RNA. Involved in the processing of primary rRNA transcript to yield the immediate precursors to the large and small rRNAs (23S and 16S). Processes some mRNAs, and tRNAs when they are encoded in the rRNA operon. Processes pre-crRNA and tracrRNA of type II CRISPR loci if present in the organism. This is Ribonuclease 3 from Actinobacillus pleuropneumoniae serotype 3 (strain JL03).